Consider the following 129-residue polypeptide: Small ribosomal subunit protein uS9 (129 aa).

This sequence belongs to the universal ribosomal protein uS9 family.

The chain is Small ribosomal subunit protein uS9 (rpsI) from Helicobacter pylori (strain J99 / ATCC 700824) (Campylobacter pylori J99).